The sequence spans 157 residues: Small ribosomal subunit protein uS7 (157 aa).

This sequence belongs to the universal ribosomal protein uS7 family. In terms of assembly, part of the 30S ribosomal subunit. Contacts proteins S9 and S11.

One of the primary rRNA binding proteins, it binds directly to 16S rRNA where it nucleates assembly of the head domain of the 30S subunit. Is located at the subunit interface close to the decoding center, probably blocks exit of the E-site tRNA. The protein is Small ribosomal subunit protein uS7 of Francisella tularensis subsp. tularensis (strain FSC 198).